The sequence spans 438 residues: Cysteine--tRNA ligase (438 aa).

Cysteine 28 contributes to the Zn(2+) binding site. The 'HIGH' region signature appears at 30–40 (PTVYNHLHLGN). Positions 207, 232, and 236 each coordinate Zn(2+). The 'KMSKS' region motif lies at 264–268 (KMSKS). Lysine 267 contributes to the ATP binding site.

Belongs to the class-I aminoacyl-tRNA synthetase family. Monomer. The cofactor is Zn(2+).

Its subcellular location is the cytoplasm. The enzyme catalyses tRNA(Cys) + L-cysteine + ATP = L-cysteinyl-tRNA(Cys) + AMP + diphosphate. In Onion yellows phytoplasma (strain OY-M), this protein is Cysteine--tRNA ligase.